The sequence spans 106 residues: ATP-dependent Clp protease adapter protein ClpS (106 aa).

Basic and acidic residues predominate over residues 1–13 (MPRKTSHEHDHGL). The interval 1 to 21 (MPRKTSHEHDHGLVVETSKPE) is disordered.

This sequence belongs to the ClpS family. Binds to the N-terminal domain of the chaperone ClpA.

Functionally, involved in the modulation of the specificity of the ClpAP-mediated ATP-dependent protein degradation. In Xanthomonas campestris pv. campestris (strain 8004), this protein is ATP-dependent Clp protease adapter protein ClpS.